The chain runs to 467 residues: ATP synthase subunit beta (467 aa).

Position 156-163 (156-163) interacts with ATP; it reads GGAGVGKT.

Belongs to the ATPase alpha/beta chains family. In terms of assembly, F-type ATPases have 2 components, CF(1) - the catalytic core - and CF(0) - the membrane proton channel. CF(1) has five subunits: alpha(3), beta(3), gamma(1), delta(1), epsilon(1). CF(0) has three main subunits: a(1), b(2) and c(9-12). The alpha and beta chains form an alternating ring which encloses part of the gamma chain. CF(1) is attached to CF(0) by a central stalk formed by the gamma and epsilon chains, while a peripheral stalk is formed by the delta and b chains.

The protein resides in the cell inner membrane. The catalysed reaction is ATP + H2O + 4 H(+)(in) = ADP + phosphate + 5 H(+)(out). Produces ATP from ADP in the presence of a proton gradient across the membrane. The catalytic sites are hosted primarily by the beta subunits. This Ralstonia nicotianae (strain ATCC BAA-1114 / GMI1000) (Ralstonia solanacearum) protein is ATP synthase subunit beta.